The primary structure comprises 155 residues: Protein FAM162B (155 aa).

A helical transmembrane segment spans residues 95-114 (VKACYIMMGLTIFACLVMIV).

This sequence belongs to the UPF0389 family.

The protein localises to the membrane. The protein is Protein FAM162B (fam162b) of Danio rerio (Zebrafish).